The sequence spans 505 residues: TBC1 domain family member 22B (505 aa).

Ala-2 is subject to N-acetylalanine. Phosphoserine occurs at positions 58 and 116. The segment at 105–146 (SKLRVKPERSQSTTSDVPANYKVIKSSSDAQLSRNSSDTCLR) is disordered. The span at 129 to 146 (KSSSDAQLSRNSSDTCLR) shows a compositional bias: polar residues. Residue Ser-154 is modified to Phosphoserine. Residues 210 to 434 (GVPREVRPIT…RLWDTYQSEP (225 aa)) form the Rab-GAP TBC domain.

Interacts with ACBD3 and ARFGEF1. Interacts with YWHAB, YWHAE, YWHAG, YWHAH, YWHAQ and YWHAZ.

Functionally, may act as a GTPase-activating protein for Rab family protein(s). In Homo sapiens (Human), this protein is TBC1 domain family member 22B (TBC1D22B).